The chain runs to 394 residues: 1-acylglycerol-3-phosphate O-acyltransferase ICT1 (394 aa).

Residues 74–381 (VLIHGYAASS…AGHNLFLDNP (308 aa)) form the AB hydrolase-1 domain. Residues 374 to 379 (HNLFLD) carry the HXXXXD motif motif.

This sequence belongs to the peptidase S33 family. ABHD4/ABHD5 subfamily.

It carries out the reaction a 1-acyl-sn-glycero-3-phosphate + an acyl-CoA = a 1,2-diacyl-sn-glycero-3-phosphate + CoA. Functionally, lysophosphatidic acid acyltransferase involved in membrane remodeling leading to increased organic solvent tolerance. Involved in resistance to azoles and copper. The chain is 1-acylglycerol-3-phosphate O-acyltransferase ICT1 (ICT1) from Saccharomyces cerevisiae (strain ATCC 204508 / S288c) (Baker's yeast).